Reading from the N-terminus, the 599-residue chain is Elongation factor 4 (599 aa).

The 183-residue stretch at 5-187 (SHIRNFSIIA…RLVAVIPPPT (183 aa)) folds into the tr-type G domain. GTP is bound by residues 17-22 (DHGKST) and 134-137 (NKMD).

This sequence belongs to the TRAFAC class translation factor GTPase superfamily. Classic translation factor GTPase family. LepA subfamily.

Its subcellular location is the cell inner membrane. The catalysed reaction is GTP + H2O = GDP + phosphate + H(+). Required for accurate and efficient protein synthesis under certain stress conditions. May act as a fidelity factor of the translation reaction, by catalyzing a one-codon backward translocation of tRNAs on improperly translocated ribosomes. Back-translocation proceeds from a post-translocation (POST) complex to a pre-translocation (PRE) complex, thus giving elongation factor G a second chance to translocate the tRNAs correctly. Binds to ribosomes in a GTP-dependent manner. This Stutzerimonas stutzeri (strain A1501) (Pseudomonas stutzeri) protein is Elongation factor 4.